The chain runs to 635 residues: Chaperone protein HtpG (635 aa).

The tract at residues 1 to 344 is a; substrate-binding; sequence MSETATTNKE…SNDLPLNVSR (344 aa). A b region spans residues 345 to 561; that stretch reads EILQDNKITQ…DYEMGTQMAK (217 aa). A c region spans residues 562 to 635; it reads LLAAAGQPVP…AVNQLLAPSH (74 aa).

Belongs to the heat shock protein 90 family. As to quaternary structure, homodimer.

Its subcellular location is the cytoplasm. Molecular chaperone. Has ATPase activity. This is Chaperone protein HtpG from Vibrio cholerae serotype O1 (strain ATCC 39541 / Classical Ogawa 395 / O395).